Reading from the N-terminus, the 152-residue chain is Transcriptional regulator MraZ (152 aa).

2 SpoVT-AbrB domains span residues 7-51 (KERH…APDR) and 89-132 (LEMV…DPQR).

The protein belongs to the MraZ family. As to quaternary structure, forms oligomers.

The protein resides in the cytoplasm. The protein localises to the nucleoid. The polypeptide is Transcriptional regulator MraZ (Pelodictyon phaeoclathratiforme (strain DSM 5477 / BU-1)).